Here is a 229-residue protein sequence, read N- to C-terminus: Orotate phosphoribosyltransferase (229 aa).

5-phospho-alpha-D-ribose 1-diphosphate contacts are provided by residues Arg-107, Lys-108, Lys-111, His-113, and 133 to 141 (EDLTTAGGS). Thr-137 serves as a coordination point for orotate.

The protein belongs to the purine/pyrimidine phosphoribosyltransferase family. PyrE subfamily. As to quaternary structure, homodimer. It depends on Mg(2+) as a cofactor.

The catalysed reaction is orotidine 5'-phosphate + diphosphate = orotate + 5-phospho-alpha-D-ribose 1-diphosphate. It functions in the pathway pyrimidine metabolism; UMP biosynthesis via de novo pathway; UMP from orotate: step 1/2. Functionally, catalyzes the transfer of a ribosyl phosphate group from 5-phosphoribose 1-diphosphate to orotate, leading to the formation of orotidine monophosphate (OMP). The protein is Orotate phosphoribosyltransferase of Rhizobium etli (strain CIAT 652).